A 219-amino-acid chain; its full sequence is Peroxiredoxin-5, mitochondrial (219 aa).

A mitochondrion-targeting transit peptide spans 1–57 (MRLGWLRVLGCRPGSVVSRATIVEGASTTAAGTRGCLEGILEWTFGGVRGFRSAAVA). One can recognise a Thioredoxin domain in the interval 61 to 219 (IKVGDAIPSV…SLAPNILSQL (159 aa)). The residue at position 80 (Lys-80) is an N6-acetyllysine. An N6-acetyllysine; alternate modification is found at Lys-88. Residue Lys-88 is modified to N6-succinyllysine; alternate. Cys-105 serves as the catalytic Cysteine sulfenic acid (-SOH) intermediate. The S-palmitoyl cysteine moiety is linked to residue Cys-105. Residues Cys-105 and Cys-209 are joined by a disulfide bond. Lys-121 bears the N6-succinyllysine mark. A Phosphoserine modification is found at Ser-187. The Microbody targeting signal signature appears at 217–219 (SQL).

This sequence belongs to the peroxiredoxin family. Prx5 subfamily. In terms of assembly, monomer. In terms of processing, S-palmitoylated. Palmitoylation occurs on the active site, inhibiting its reactivity; therefore PRDX5 palmitoylation status determines its antioxidant capacity. S-palmitoylated. Depalmitoylated by ABHD10.

The protein resides in the mitochondrion. The protein localises to the cytoplasm. It localises to the peroxisome matrix. The catalysed reaction is a hydroperoxide + [thioredoxin]-dithiol = an alcohol + [thioredoxin]-disulfide + H2O. Thiol-specific peroxidase that catalyzes the reduction of hydrogen peroxide and organic hydroperoxides to water and alcohols, respectively. Plays a role in cell protection against oxidative stress by detoxifying peroxides and as sensor of hydrogen peroxide-mediated signaling events. This is Peroxiredoxin-5, mitochondrial (PRDX5) from Bos taurus (Bovine).